The following is an 86-amino-acid chain: Small ribosomal subunit protein bS20 (86 aa).

The segment at 1 to 22 (MANIASARKRARQAEKNRQHNM) is disordered.

The protein belongs to the bacterial ribosomal protein bS20 family.

Binds directly to 16S ribosomal RNA. This Thioalkalivibrio sulfidiphilus (strain HL-EbGR7) protein is Small ribosomal subunit protein bS20.